The following is a 373-amino-acid chain: Probable tRNA sulfurtransferase (373 aa).

The THUMP domain occupies N54–I158. ATP contacts are provided by residues L176–F177, N201–F202, K256, G278, and Q287.

It belongs to the ThiI family.

It is found in the cytoplasm. It carries out the reaction [ThiI sulfur-carrier protein]-S-sulfanyl-L-cysteine + a uridine in tRNA + 2 reduced [2Fe-2S]-[ferredoxin] + ATP + H(+) = [ThiI sulfur-carrier protein]-L-cysteine + a 4-thiouridine in tRNA + 2 oxidized [2Fe-2S]-[ferredoxin] + AMP + diphosphate. It catalyses the reaction [ThiS sulfur-carrier protein]-C-terminal Gly-Gly-AMP + S-sulfanyl-L-cysteinyl-[cysteine desulfurase] + AH2 = [ThiS sulfur-carrier protein]-C-terminal-Gly-aminoethanethioate + L-cysteinyl-[cysteine desulfurase] + A + AMP + 2 H(+). It functions in the pathway cofactor biosynthesis; thiamine diphosphate biosynthesis. Functionally, catalyzes the ATP-dependent transfer of a sulfur to tRNA to produce 4-thiouridine in position 8 of tRNAs, which functions as a near-UV photosensor. Also catalyzes the transfer of sulfur to the sulfur carrier protein ThiS, forming ThiS-thiocarboxylate. This is a step in the synthesis of thiazole, in the thiamine biosynthesis pathway. The sulfur is donated as persulfide by IscS. The protein is Probable tRNA sulfurtransferase of Saccharolobus islandicus (strain M.16.27) (Sulfolobus islandicus).